Reading from the N-terminus, the 60-residue chain is Large ribosomal subunit protein bL32 (60 aa).

It belongs to the bacterial ribosomal protein bL32 family.

The chain is Large ribosomal subunit protein bL32 (rpmF) from Thermotoga maritima (strain ATCC 43589 / DSM 3109 / JCM 10099 / NBRC 100826 / MSB8).